The sequence spans 433 residues: DNA methyltransferase 1-associated protein 1 (433 aa).

A required for nuclear localization region spans residues 1–204; it reads MSADVRDILD…EVVALLAKAK (204 aa). In terms of domain architecture, Myb-like spans 148 to 197; that stretch reads NNWSKVQTDHLFDLARRFDLRFIVMADRWNRQQHGTKTVEELKERYYEVV. The stretch at 186-281 forms a coiled coil; that stretch reads VEELKERYYE…ADQQNEHASN (96 aa). Basic and acidic residues predominate over residues 252-264; that stretch reads EARKKERERKTQD. The segment at 252–305 is disordered; that stretch reads EARKKERERKTQDLQKLISQADQQNEHASNTPSTRKYEKKLHKKKVHQQPRPSR. The segment covering 268-285 has biased composition (polar residues); sequence LISQADQQNEHASNTPST. A compositionally biased stretch (basic residues) spans 288-299; the sequence is YEKKLHKKKVHQ.

Interacts with Rel. Interacts with akirin and Bap55.

It is found in the nucleus. The protein resides in the cytoplasm. Involved in transcription repression and activation. Required for larvae and pupal development, and for normal innate immune responses. Involved in modulating the activation of the immune deficiency pathway (Imd), acting either downstream of, or at the level of, the NF-kappa-B factor Rel. Possibly functions with akirin to regulate Rel, and its interaction with the Brahma complex protein Bap55 suggests that it may regulate the IMD pathway at the level of chromatin remodeling. The protein is DNA methyltransferase 1-associated protein 1 of Drosophila melanogaster (Fruit fly).